Here is a 537-residue protein sequence, read N- to C-terminus: Probable E3 ubiquitin-protein ligase ARI3 (537 aa).

Residues methionine 1–glutamate 30 are disordered. A TRIAD supradomain region spans residues lysine 117 to lysine 331. Positions 121, 124, 139, 141, 144, 147, 166, 171, 210, 216, 234, 236, 241, 244, 249, 254, 281, and 284 each coordinate Zn(2+). The RING-type 1 zinc finger occupies cysteine 121 to cysteine 171. The IBR-type zinc finger occupies aspartate 190–cysteine 254. Residues cysteine 281–cysteine 309 form an RING-type 2; atypical zinc finger. Cysteine 294 is an active-site residue. Residues cysteine 299, cysteine 301, cysteine 306, cysteine 309, histidine 317, and cysteine 327 each coordinate Zn(2+).

Belongs to the RBR family. Ariadne subfamily. Zn(2+) is required as a cofactor. In terms of tissue distribution, ubiquitous.

It carries out the reaction [E2 ubiquitin-conjugating enzyme]-S-ubiquitinyl-L-cysteine + [acceptor protein]-L-lysine = [E2 ubiquitin-conjugating enzyme]-L-cysteine + [acceptor protein]-N(6)-ubiquitinyl-L-lysine.. Its pathway is protein modification; protein ubiquitination. Might act as an E3 ubiquitin-protein ligase, or as part of E3 complex, which accepts ubiquitin from specific E2 ubiquitin-conjugating enzymes and then transfers it to substrates. This Arabidopsis thaliana (Mouse-ear cress) protein is Probable E3 ubiquitin-protein ligase ARI3 (ARI3).